Consider the following 174-residue polypeptide: ATP-dependent protease subunit HslV (174 aa).

Thr-2 is a catalytic residue. Gly-157, Cys-160, and Thr-163 together coordinate Na(+).

The protein belongs to the peptidase T1B family. HslV subfamily. As to quaternary structure, a double ring-shaped homohexamer of HslV is capped on each side by a ring-shaped HslU homohexamer. The assembly of the HslU/HslV complex is dependent on binding of ATP.

Its subcellular location is the cytoplasm. It carries out the reaction ATP-dependent cleavage of peptide bonds with broad specificity.. With respect to regulation, allosterically activated by HslU binding. Functionally, protease subunit of a proteasome-like degradation complex believed to be a general protein degrading machinery. This Shewanella woodyi (strain ATCC 51908 / MS32) protein is ATP-dependent protease subunit HslV.